A 924-amino-acid chain; its full sequence is DNA repair and recombination protein RDH54 (924 aa).

Residues Met-1–Pro-10 are compositionally biased toward basic and acidic residues. Disordered regions lie at residues Met-1 to Lys-21 and Glu-155 to Gly-183. Positions Thr-168 to Thr-178 are enriched in low complexity. Residues Leu-299 to Gly-487 form the Helicase ATP-binding domain. Position 346-353 (Ile-346–Lys-353) interacts with ATP. A DEGH box motif is present at residues Asn-472–Asn-475. Residue Lys-615 forms a Glycyl lysine isopeptide (Lys-Gly) (interchain with G-Cter in ubiquitin) linkage. The region spanning Lys-631–Ser-790 is the Helicase C-terminal domain.

Belongs to the SNF2/RAD54 helicase family. As to quaternary structure, interacts with RAD51 and DMC1.

The protein resides in the nucleus. It catalyses the reaction ATP + H2O = ADP + phosphate + H(+). Its function is as follows. Involved in the recombinational repair of double-strand breaks (DSB) in DNA during mitosis and meiosis. Has DNA dependent ATPase activity. Promotes D-loop (displacement loop) formation with RAD51 recombinase. Modifies the topology of double-stranded DNA during the D-loop reaction to facilitate the invasion of the homologous duplex molecule by the initiating single-stranded DNA substrate. Required for adaptation from G2/M checkpoint arrest induced by a double strand break, by participating in monitoring the extent of single-stranded DNA produced by resection of DNA ends. This role is distinct from its roles in recombination. Promotes colocalization of RAD51 and DMC1 during meiotic recombination. Involved in crossover interference. The protein is DNA repair and recombination protein RDH54 (RDH54) of Saccharomyces cerevisiae (strain JAY291) (Baker's yeast).